A 624-amino-acid chain; its full sequence is RQC trigger complex subunit CUE3 (624 aa).

The CUE domain maps to 316–359; sequence VNEEQLSALMELFPQFSKYQLSQTLLAYDNNIELVTNKIFEDPT. Disordered regions lie at residues 366 to 390, 435 to 469, and 546 to 624; these read REPA…ELSI, RDDT…DDSN, and SKTG…NNAI. Phosphoserine is present on Ser377. Composition is skewed to basic and acidic residues over residues 443–455 and 568–589; these read DVNR…RIGL and EQAK…TEQK. Residues 590–617 are compositionally biased toward basic residues; the sequence is KRQHAKNEKRKGARANHNRKKGHDKKLA.

Component of the RQT (ribosome quality control trigger) complex, composed of SLH1, CUE3, and RQT4. Interacts with ubiquitin; the interaction is direct. Interacts with SLH1. Interacts with RQT4. Interacts with HEL2. Associates with translating ribosomes.

It localises to the cytoplasm. In terms of biological role, involved in activation of the ribosome quality control (RQC) pathway, a pathway that degrades nascent peptide chains during problematic translation. Specifically recognizes and binds RPS20/uS10 ubiquitinated by HEL2, promoting recruitment of the RQT (ribosome quality control trigger) complex on stalled ribosomes, followed by disassembly of stalled ribosomes. This is RQC trigger complex subunit CUE3 (CUE3) from Saccharomyces cerevisiae (strain ATCC 204508 / S288c) (Baker's yeast).